Consider the following 738-residue polypeptide: DNA ligase (738 aa).

Residues 48 to 52 (DVVYD), 97 to 98 (SL), and glutamate 136 contribute to the NAD(+) site. The active-site N6-AMP-lysine intermediate is lysine 138. NAD(+) is bound by residues arginine 159, glutamate 196, lysine 356, and lysine 380. 4 residues coordinate Zn(2+): cysteine 474, cysteine 477, cysteine 492, and cysteine 497. The BRCT domain maps to 659 to 738 (QLPQPLAGKT…SQLLELLEET (80 aa)).

It belongs to the NAD-dependent DNA ligase family. LigA subfamily. Requires Mg(2+) as cofactor. The cofactor is Mn(2+).

It catalyses the reaction NAD(+) + (deoxyribonucleotide)n-3'-hydroxyl + 5'-phospho-(deoxyribonucleotide)m = (deoxyribonucleotide)n+m + AMP + beta-nicotinamide D-nucleotide.. Functionally, DNA ligase that catalyzes the formation of phosphodiester linkages between 5'-phosphoryl and 3'-hydroxyl groups in double-stranded DNA using NAD as a coenzyme and as the energy source for the reaction. It is essential for DNA replication and repair of damaged DNA. This chain is DNA ligase, found in Cyanothece sp. (strain PCC 7425 / ATCC 29141).